A 221-amino-acid polypeptide reads, in one-letter code: Iron-sulfur cluster repair protein YtfE (221 aa).

This sequence belongs to the RIC family. YtfE subfamily. As to quaternary structure, homodimer.

It is found in the cytoplasm. Di-iron-containing protein involved in the repair of iron-sulfur clusters damaged by oxidative and nitrosative stress conditions. The chain is Iron-sulfur cluster repair protein YtfE from Pectobacterium carotovorum subsp. carotovorum (strain PC1).